The following is a 302-amino-acid chain: Sulfate adenylyltransferase subunit 2 (302 aa).

This sequence belongs to the PAPS reductase family. CysD subfamily. In terms of assembly, heterodimer composed of CysD, the smaller subunit, and CysN.

It carries out the reaction sulfate + ATP + H(+) = adenosine 5'-phosphosulfate + diphosphate. Its pathway is sulfur metabolism; hydrogen sulfide biosynthesis; sulfite from sulfate: step 1/3. With CysN forms the ATP sulfurylase (ATPS) that catalyzes the adenylation of sulfate producing adenosine 5'-phosphosulfate (APS) and diphosphate, the first enzymatic step in sulfur assimilation pathway. APS synthesis involves the formation of a high-energy phosphoric-sulfuric acid anhydride bond driven by GTP hydrolysis by CysN coupled to ATP hydrolysis by CysD. In Escherichia coli O1:K1 / APEC, this protein is Sulfate adenylyltransferase subunit 2.